A 70-amino-acid chain; its full sequence is Large ribosomal subunit protein bL31 (70 aa).

The Zn(2+) site is built by cysteine 16, cysteine 18, cysteine 37, and cysteine 40.

It belongs to the bacterial ribosomal protein bL31 family. Type A subfamily. Part of the 50S ribosomal subunit. The cofactor is Zn(2+).

Functionally, binds the 23S rRNA. In Histophilus somni (strain 2336) (Haemophilus somnus), this protein is Large ribosomal subunit protein bL31.